We begin with the raw amino-acid sequence, 222 residues long: uncharacterized protein (222 aa).

Transmembrane regions (helical) follow at residues 22 to 42 (IRVI…FLYI) and 189 to 209 (AICL…FCLV).

The protein resides in the cell membrane. This is an uncharacterized protein from Escherichia coli (strain K12).